A 138-amino-acid chain; its full sequence is Salivary protein 15 Iper-3 (138 aa).

The signal sequence occupies residues 1 to 21 (MESFVAMKVVCITVLFVIVAV). Asparagine 30, asparagine 42, asparagine 68, asparagine 107, and asparagine 127 each carry an N-linked (GlcNAc...) asparagine glycan. A CD4-binding region spans residues 119 to 138 (GPNGQKCANKSQCVGHIPGC).

Belongs to the salp15 family. As to quaternary structure, interacts with host CD4. Interacts with host DC-SIGN (CD209). Interacts with Borrelia outer surface protein C (OspC). In terms of tissue distribution, expressed in salivary glands.

The protein localises to the secreted. In terms of biological role, salivary tick protein that downregulates host immune system by binding to both dendritic cells, and CD4(+) T cells. Specifically binds to the CD4 coreceptor on T cells. This interaction prevents the activation of the Src kinase, Lck, and its downstream substrate Zap-70, and results in deficient activation of PLCgamma1, the repression of calcium fluxes triggered by T-cell antigen receptor (TCR) ligation, and a subsequent reduction in interleukin-2 production. This salivary protein also binds to DC-SIGN (CD209) on dendritic cells (DC) and activates the Raf-1 kinase/MEK signaling pathway that results in down-regulating expression of pro-inflammatory cytokines. Furthermore, it inhibits T cell proliferation induced by DCs. It also inhibits in vitro keratinocyte inflammation induced by Borrelia burgdorferi or by the major outer surface protein (OspC) of Borrelia. In addition, it downregulates chemokines and monocyte chemoattractant protein 1, as well as several antimicrobial peptides such as defensins, cathelicidin, psoriasin, and RNase 7. Apart from its immunomodulatory activities, it is also associated with protection of Borrelia spirochetes from antibody-mediated killing through its binding to OspC. In vivo, tests on different immune disease animal models show promising therapeutic results, e.g., in inhibiting HIV infection, experimental autoimmune encephalomyelitis, transplantation rejection, and asthma. The chain is Salivary protein 15 Iper-3 from Ixodes persulcatus (Taiga tick).